The chain runs to 240 residues: MIRSRQPLLDALGVDLPDELLSLALTHRSYAYENGGLPTNERLEFLGDAVLGLTITDALFHRHPDRSEGDLAKLRASVVNTQALADVARRLCAEGLGVHVLLGRGEANTGGADKSSILADGMESLLGAIYLQHGMEKAREVILRLFGPLLDAAPTLGAGLDWKTSLQELTAARGLGAPSYLVTSTGPDHDKEFTAVVVVMDSEYGSGVGRSKKEAEQKAAAAAWKALEVLDNAMPGKTSA.

An RNase III domain is found at 4–134; sequence SRQPLLDALG…LLGAIYLQHG (131 aa). E44 provides a ligand contact to Mg(2+). Residue D48 is part of the active site. Residues D120 and E123 each contribute to the Mg(2+) site. E123 is a catalytic residue. The region spanning 161–229 is the DRBM domain; it reads DWKTSLQELT…AAAAWKALEV (69 aa).

Belongs to the ribonuclease III family. Homodimer. Mg(2+) serves as cofactor.

It is found in the cytoplasm. The enzyme catalyses Endonucleolytic cleavage to 5'-phosphomonoester.. In terms of biological role, digests double-stranded RNA. Involved in the processing of primary rRNA transcript to yield the immediate precursors to the large and small rRNAs (23S and 16S). Processes some mRNAs, and tRNAs when they are encoded in the rRNA operon. Processes pre-crRNA and tracrRNA of type II CRISPR loci if present in the organism. The sequence is that of Ribonuclease 3 from Mycobacterium bovis (strain ATCC BAA-935 / AF2122/97).